The primary structure comprises 88 residues: Small ribosomal subunit protein bS20 (88 aa).

It belongs to the bacterial ribosomal protein bS20 family.

Functionally, binds directly to 16S ribosomal RNA. This Coprothermobacter proteolyticus (strain ATCC 35245 / DSM 5265 / OCM 4 / BT) protein is Small ribosomal subunit protein bS20.